A 321-amino-acid polypeptide reads, in one-letter code: F420-non-reducing hydrogenase iron-sulfur subunit G (321 aa).

This sequence belongs to the [NiFe]/[NiFeSe] hydrogenase small subunit family. As to quaternary structure, the F420-non-reducing hydrogenase is composed of three subunits; MvhA, MvhD and MvhG. It forms a complex with the heterodisulfide reductase (Hdr).

Its subcellular location is the cytoplasm. Functionally, part of a complex that provides reducing equivalents for heterodisulfide reductase. The sequence is that of F420-non-reducing hydrogenase iron-sulfur subunit G (mvhG) from Archaeoglobus profundus (strain DSM 5631 / JCM 9629 / NBRC 100127 / Av18).